Reading from the N-terminus, the 377-residue chain is 2-iminoacetate synthase (377 aa).

The 231-residue stretch at 71-301 (NTVSFYVPLY…PEIELSLSTR (231 aa)) folds into the Radical SAM core domain. Cys85, Cys89, and Cys92 together coordinate [4Fe-4S] cluster.

The protein belongs to the radical SAM superfamily. ThiH family. As to quaternary structure, forms a heterodimer with ThiG. [4Fe-4S] cluster is required as a cofactor.

The catalysed reaction is L-tyrosine + S-adenosyl-L-methionine + NADPH = 2-iminoacetate + 4-methylphenol + 5'-deoxyadenosine + L-methionine + NADP(+). The protein operates within cofactor biosynthesis; thiamine diphosphate biosynthesis. Its function is as follows. Catalyzes the radical-mediated cleavage of tyrosine to 2-iminoacetate and 4-cresol. The chain is 2-iminoacetate synthase (thiH) from Salmonella typhimurium (strain LT2 / SGSC1412 / ATCC 700720).